The following is a 314-amino-acid chain: MIEIEKPKIETVEISDDAKYGKFVVEPLERGYGTTLGNSLRRILLSSLPGAAVTSIQIDGVLHEFSTIEGVVEDVTTIILNIKKLALKIYSEEEKTLEIDVQGEGVVTAADITHDSDVEILNPDLHIATLGQNASFRVRLTAQRGRGYTPADANKRDDQPIGVIPIDSIFTPVSRVSYQVENTRVGQITNYDKLTLDVWTDGSTGPKEAIALGSKILTEHLNIFVGLTDEAQHAEIMVEKEEDQKEKVLEMTIEELDLSVRSYNCLKRAGINTVQELANKTEEDMMKVRNLGRKSLEEVKAKLEELGLGLRKDD.

The segment at 1–228 is alpha N-terminal domain (alpha-NTD); that stretch reads MIEIEKPKIE…EHLNIFVGLT (228 aa). Positions 245–314 are alpha C-terminal domain (alpha-CTD); sequence KEKVLEMTIE…ELGLGLRKDD (70 aa).

Belongs to the RNA polymerase alpha chain family. Homodimer. The RNAP catalytic core consists of 2 alpha, 1 beta, 1 beta' and 1 omega subunit. When a sigma factor is associated with the core the holoenzyme is formed, which can initiate transcription.

It carries out the reaction RNA(n) + a ribonucleoside 5'-triphosphate = RNA(n+1) + diphosphate. DNA-dependent RNA polymerase catalyzes the transcription of DNA into RNA using the four ribonucleoside triphosphates as substrates. The sequence is that of DNA-directed RNA polymerase subunit alpha from Bacillus licheniformis (strain ATCC 14580 / DSM 13 / JCM 2505 / CCUG 7422 / NBRC 12200 / NCIMB 9375 / NCTC 10341 / NRRL NRS-1264 / Gibson 46).